The sequence spans 361 residues: Caveolae-associated protein 4 (361 aa).

The tract at residues methionine 1–valine 21 is disordered. Positions isoleucine 100–isoleucine 124 form a coiled coil. A phosphoserine mark is found at serine 152, serine 171, and serine 172. The stretch at glutamate 204–lysine 248 forms a coiled coil. Positions arginine 230–lysine 255 are enriched in basic and acidic residues. 2 disordered regions span residues arginine 230–glutamate 283 and proline 310–glutamine 346. Threonine 335 bears the Phosphothreonine mark. Phosphoserine is present on serine 354.

Belongs to the CAVIN family. Component of the CAVIN complex composed of CAVIN1, CAVIN2, CAVIN3 and CAVIN4. Interacts with CAVIN1, ADRA1A, ADRA1B, MAPK1 and MAPK3. Interacts with CAVIN2; this augments the transactivation of NPPA.

Its subcellular location is the cytoplasm. It localises to the myofibril. It is found in the sarcomere. The protein localises to the cytosol. The protein resides in the cell membrane. Its subcellular location is the sarcolemma. It localises to the membrane. It is found in the caveola. Functionally, modulates the morphology of formed caveolae in cardiomyocytes, but is not required for caveolar formation. Facilitates the recruitment of MAPK1/3 to caveolae within cardiomyocytes and regulates alpha-1 adrenergic receptor-induced hypertrophic responses in cardiomyocytes through MAPK1/3 activation. Contributes to proper membrane localization and stabilization of caveolin-3 (CAV3) in cardiomyocytes. Induces RHOA activation and activates NPPA transcription and myofibrillar organization through the Rho/ROCK signaling pathway. This Bos taurus (Bovine) protein is Caveolae-associated protein 4 (CAVIN4).